A 148-amino-acid chain; its full sequence is Macrodomain Ter protein (148 aa).

It belongs to the MatP family. As to quaternary structure, homodimer.

The protein localises to the cytoplasm. Its function is as follows. Required for spatial organization of the terminus region of the chromosome (Ter macrodomain) during the cell cycle. Prevents early segregation of duplicated Ter macrodomains during cell division. Binds specifically to matS, which is a 13 bp signature motif repeated within the Ter macrodomain. The polypeptide is Macrodomain Ter protein (Photobacterium profundum (strain SS9)).